We begin with the raw amino-acid sequence, 161 residues long: DNA-directed RNA polymerase 18 kDa subunit (161 aa).

The protein belongs to the poxviridae DNA-directed RNA polymerase 18 kDa subunit family. The DNA-dependent RNA polymerase used for intermediate and late genes expression consists of eight subunits Rpo30/OPG66, Rpo7/OPG90, Rpo22/OPG103, Rpo147/OPG105, Rpo18/OPG119, Rpo19/OPG131, Rpo132/OPG151 and Rpo35/OPG156. The same holoenzyme, with the addition of the transcription-specificity factor OPG109, is used for early gene expression.

It localises to the virion. The catalysed reaction is RNA(n) + a ribonucleoside 5'-triphosphate = RNA(n+1) + diphosphate. Its function is as follows. Part of the DNA-dependent RNA polymerase which catalyzes the transcription of viral DNA into RNA using the four ribonucleoside triphosphates as substrates. Responsible for the transcription of early, intermediate and late genes. DNA-dependent RNA polymerase associates with the early transcription factor (ETF), itself composed of OPG118 and OPG133, thereby allowing the early genes transcription. Late transcription, and probably also intermediate transcription, require newly synthesized RNA polymerase. The sequence is that of DNA-directed RNA polymerase 18 kDa subunit (OPG119) from Vaccinia virus (strain Ankara) (VACV).